The chain runs to 475 residues: MGMWASVDAMWDFPAEKRIFGAVLLFSWTVYLWETFLAQRQRRIYKTTTRVPAELEQIMDSDTFEKSRLYQLDKSTFSFWSGLYSEVEGTFILLFGGIPYLWRLSGQFCSSAGFGPEYEIIQSLVFLLLATLFSALTGLPWSLYNTFVIEEKHGFNHQTLEFFMKDAIKKFIVTQCILLPVSALLLYIIKIGGDYFFIYAWLFTLVVSLVLVTIYADYIAPLFDKFTPLPEGKLKQEIEVMAKSIDFPLTKVYVVEGSKRSSHSNAYFYGFFKNKRIVLFDTLLEEYSVPNKDNQEESGMEARNEGEGDSEEVKAKVKNKKQGCKNEEVLAVLGHELGHWKLGHTVKNIIISQMNSFLCFFLFAVLIGRRELFAAFGFYDSQPTLIGLLIIFQFIFSPYNEVLSFCLTVLSRRFEFQADAFAKKLGKAKDLYSALIKLNKDNLGFPVSDWLFSTWHYSHPPLLERLQALKNAKQD.

Residues M1 to R18 lie on the Lumenal side of the membrane. The chain crosses the membrane as a helical span at residues I19–Q39. The Nuclear segment spans residues R40–S81. The helical transmembrane segment at G82 to W102 threads the bilayer. The Lumenal segment spans residues R103–S123. A helical transmembrane segment spans residues L124 to Y144. At N145 to K170 the chain is on the nuclear side. A helical membrane pass occupies residues F171–I191. Residues G192–Y195 lie on the Lumenal side of the membrane. The chain crosses the membrane as a helical span at residues F196–A216. Over D217 to K347 the chain is Nuclear. Residues D293–K314 form a disordered region. A compositionally biased stretch (basic and acidic residues) spans M300–K314. A Zn(2+)-binding site is contributed by H335. The active site involves E336. H339 provides a ligand contact to Zn(2+). The chain crosses the membrane as a helical span at residues N348 to G368. Residues R369 to Q382 lie on the Lumenal side of the membrane. A helical membrane pass occupies residues P383–F405. The Nuclear segment spans residues C406 to D475. A Zn(2+)-binding site is contributed by E415.

Belongs to the peptidase M48A family. Zn(2+) serves as cofactor.

Its subcellular location is the endoplasmic reticulum membrane. The protein localises to the nucleus inner membrane. The protein resides in the early endosome membrane. It is found in the late endosome membrane. It catalyses the reaction Hydrolyzes the peptide bond -P2-(S-farnesyl or geranylgeranyl)C-P1'-P2'-P3'-COOH where P1' and P2' are amino acids with aliphatic side chains and P3' is any C-terminal residue.. With respect to regulation, inhibited by HIV protease inhibitors, such as lopinavir, tipranavir and nelfinavir, leading to defects in lamin A/LMNA maturation and accumulation of prelamin-A/C precursors in cells. This causes defects in nuclear envelope integrity and release of DNA in the cytosol, activating the AIM2 inflammasome. In terms of biological role, transmembrane metalloprotease whose catalytic activity is critical for processing lamin A/LMNA on the inner nuclear membrane and clearing clogged translocons on the endoplasmic reticulum. Proteolytically removes the C-terminal three residues of farnesylated proteins. Also plays an antiviral role independently of its protease activity by restricting enveloped RNA and DNA viruses. Mechanistically, controls IFITM antiviral pathway to hinder viruses from breaching the endosomal barrier by modulating membrane fluidity. This chain is CAAX prenyl protease 1 homolog, found in Mus musculus (Mouse).